A 636-amino-acid polypeptide reads, in one-letter code: ATP-dependent zinc metalloprotease FtsH (636 aa).

The Cytoplasmic segment spans residues Met-1 to Met-12. A helical membrane pass occupies residues Gly-13–Ile-33. Residues Arg-34–Leu-104 lie on the Periplasmic side of the membrane. A helical transmembrane segment spans residues Leu-105–Phe-125. Over Met-126–Glu-636 the chain is Cytoplasmic. Residue Gly-197–Thr-204 participates in ATP binding. Zn(2+) is bound at residue His-419. Residue Glu-420 is part of the active site. Zn(2+) is bound by residues His-423 and Asp-497.

This sequence in the central section; belongs to the AAA ATPase family. The protein in the C-terminal section; belongs to the peptidase M41 family. In terms of assembly, homohexamer. Zn(2+) serves as cofactor.

The protein localises to the cell inner membrane. Acts as a processive, ATP-dependent zinc metallopeptidase for both cytoplasmic and membrane proteins. Plays a role in the quality control of integral membrane proteins. In Neorickettsia risticii (strain Illinois), this protein is ATP-dependent zinc metalloprotease FtsH.